A 318-amino-acid polypeptide reads, in one-letter code: Probable cell division protein WhiA (318 aa).

Residues 281–314 (SLKELGQMLVPPVGKSGVNHRLRKIEEISKKLKE) constitute a DNA-binding region (H-T-H motif).

This sequence belongs to the WhiA family.

Involved in cell division and chromosome segregation. This is Probable cell division protein WhiA from Thermoanaerobacter sp. (strain X514).